Reading from the N-terminus, the 72-residue chain is uncharacterized protein (72 aa).

The chain crosses the membrane as a helical span at residues 33–53; sequence VCIFFSLIFFFFFFFFCVNWG.

The protein resides in the membrane. This is an uncharacterized protein from Dictyostelium discoideum (Social amoeba).